The following is an 84-amino-acid chain: Small ribosomal subunit protein uS17 (84 aa).

The protein belongs to the universal ribosomal protein uS17 family. As to quaternary structure, part of the 30S ribosomal subunit.

Functionally, one of the primary rRNA binding proteins, it binds specifically to the 5'-end of 16S ribosomal RNA. This chain is Small ribosomal subunit protein uS17, found in Porphyromonas gingivalis (strain ATCC 33277 / DSM 20709 / CIP 103683 / JCM 12257 / NCTC 11834 / 2561).